Reading from the N-terminus, the 212-residue chain is Large ribosomal subunit protein uL1 (212 aa).

It belongs to the universal ribosomal protein uL1 family. In terms of assembly, part of the 50S ribosomal subunit.

Its function is as follows. Binds directly to 23S rRNA. Probably involved in E site tRNA release. Functionally, protein L1 is also a translational repressor protein, it controls the translation of its operon by binding to its mRNA. The polypeptide is Large ribosomal subunit protein uL1 (Methanothrix thermoacetophila (strain DSM 6194 / JCM 14653 / NBRC 101360 / PT) (Methanosaeta thermophila)).